The sequence spans 351 residues: Auxin efflux carrier component 5 (351 aa).

The next 10 helical transmembrane spans lie at 7-27, 39-59, 71-91, 100-120, 132-152, 210-230, 234-254, 271-291, 295-315, and 329-349; these read VYKVIEAMVPLYVALILGYGS, CDAINRLVCYFTLPLFTIEFT, FIAADVLSKVIIVTVLALWAK, WSITSFSLCTLTNSLVVGVPL, LVVQSSVFQAIVWLTLLLFVL, ILGIAWAFISNRWHLELPGIL, ILIMSKAGTGTAMFNMGIFMA, MVLKFIAGPAAMAIGSIVLGL, VLRVAIIQAALPQSITSFIFA, and VIFGMLVSLPVLVAYYAALEF.

The protein belongs to the auxin efflux carrier (TC 2.A.69.1) family. In terms of tissue distribution, expressed in elongating parts of hypocotyl, cotyledon vasculature and guard cells. Detected in root pericycle and root tip and at later developmental stages in leaves, stems and flowers. Expressed in veins of mature leaves.

Its subcellular location is the endoplasmic reticulum membrane. The protein resides in the cell membrane. Its function is as follows. Auxin transporter regulating intracellular auxin homeostasis and metabolism. Mediates the auxin transport from the cytosol into the lumen of the endoplasmic reticulum. May also act as an auxin efflux carrier when located to the cell membrane. PIN5 and PIN8 may have an antagonistic/compensatory activity. Involved in unfolded protein response (UPR) activation. Involved in the control of vein patterning. Promotes vein formation. PIN5, PIN6, and PIN8 control vein network geometry, but they are expressed in mutually exclusive domains of leaf vascular cells. In Arabidopsis thaliana (Mouse-ear cress), this protein is Auxin efflux carrier component 5.